Reading from the N-terminus, the 780-residue chain is MLPRPLRLLWDASPPGGVVLSSFRSRDPEEGGGPGGRGVGGGQEEEEEEEEDEAPVSVWDEEEDGATFTVTSRQYRPLDPLAPTPPPRSSRRLRAGTLEALVRHLLDARTSGADVTFTPAFLATHRAFTSTPALLGLVADRLEALESHPTDELERTIGVATSVLSTWLASHPEDFGSEVKGQLDRLESFLLRTGYAAGEGVGGGSADLIRNLRFRVDPQAPDLPKPLALPGDPPADPTDVLVFLADHLAEQLTLLDAELFLHLVPSQCLGSLWGHRDRPGHSHLCPSVRATVTQFNKVAGAVVSSVLGATSAGEGPGEVTIRPLRPPQRARLLEKWIRVAEECRLLRNFSSVYAVVSALQSSPIHRLRAAWGEATRDSLRVFSSLCQIFSEEDNYSQSRELLLQEVKLQPSLESNSKKAPRSGSGSRGGGVVPYLGTFLKDLVMLDAASKDELENGYINFDKRRKEFAVLSELRRLQNECRGYDLRPDPDIQQWLRGLRPLTEAQSHRVSCEVEPPGTSDPPAPRVLRPTLVVSQWTEVLGSVGGPTPLVSWDRPSVGGEEVPGTPAPLLTRLAQHMKWPSVSSLDSALESTPYLHSLADPSHLSPPASSPRPSRGHRRSASCGSPLSGGAEGASKGTEYRGGGSGPGASDCRIIRVQMELGEDGSVYKSILVTSQDKAPSVISRVLKKNNRDSAVASEYELVQLLPGERELTIPPSANVFYAMDGASHDFLLRQRRRPSTATLGLTSSPSASGTPPSEGGGGSFPRIKATGRKIARALF.

The segment at 1-92 (MLPRPLRLLW…PTPPPRSSRR (92 aa)) is disordered. A Phosphoserine modification is found at S13. Residues 31–42 (GGGPGGRGVGGG) are compositionally biased toward gly residues. The span at 43 to 65 (QEEEEEEEEDEAPVSVWDEEEDG) shows a compositional bias: acidic residues. The N-terminal Ras-GEF domain maps to 89 to 213 (SSRRLRAGTL…GSADLIRNLR (125 aa)). Residues 244-516 (LADHLAEQLT…HRVSCEVEPP (273 aa)) enclose the Ras-GEF domain. Residues 596-613 (HSLADPSHLSPPASSPRP) are compositionally biased toward low complexity. Disordered stretches follow at residues 596–651 (HSLA…GASD) and 741–769 (TATL…PRIK). Residues 651 to 738 (DCRIIRVQME…HDFLLRQRRR (88 aa)) enclose the Ras-associating domain. Positions 741–758 (TATLGLTSSPSASGTPPS) are enriched in low complexity.

As to quaternary structure, interacts with SAMD9.

Probable guanine nucleotide exchange factor. Putative effector of Ras and/or Rap. Associates with the GTP-bound form of Rap 1A and H-Ras in vitro. The protein is Ral guanine nucleotide dissociation stimulator-like 2 (RGL2) of Canis lupus familiaris (Dog).